Reading from the N-terminus, the 777-residue chain is Ribosome biogenesis protein ERB1 (777 aa).

A disordered region spans residues 1–122; it reads MAPTAPAKKR…RPNYRVVEDA (122 aa). The span at 36–67 shows a compositional bias: acidic residues; that stretch reads SEDDSDFVASGDEDEEDEDEDEDEDKDEDDEH. WD repeat units lie at residues 430 to 469, 473 to 513, 562 to 604, 606 to 645, 648 to 687, 691 to 731, and 747 to 777; these read GHEGRVRSSAIDPTGLWLATGGDDGYVRIWLINPARQVWA, SSDE…PEVE, TVRS…SQIP, RKLSGLAQVAHFHPSRPLFFVATQRTIRCYDLQRLELVKV, PGARWISSFDIHPGGDNLIVGSYDRRLLWHDLDLSTRPYK, FHPQ…DLME, and VDSLGVMDVDWHPSEPWCISAGADGTCRLWM.

This sequence belongs to the WD repeat BOP1/ERB1 family. Component of the NOP7 complex, composed of ERB1, NOP7 and YTM1. The complex is held together by ERB1, which interacts with NOP7 via its N-terminal domain and with YTM1 via a high-affinity interaction between the seven-bladed beta-propeller domains of the 2 proteins. The NOP7 complex associates with the 66S pre-ribosome.

It is found in the nucleus. The protein localises to the nucleolus. It localises to the nucleoplasm. In terms of biological role, component of the NOP7 complex, which is required for maturation of the 25S and 5.8S ribosomal RNAs and formation of the 60S ribosome. The sequence is that of Ribosome biogenesis protein ERB1 from Pyricularia oryzae (strain 70-15 / ATCC MYA-4617 / FGSC 8958) (Rice blast fungus).